The sequence spans 443 residues: Sulfoquinovose isomerase (443 aa).

Belongs to the SqvD family.

The catalysed reaction is 6-sulfo-beta-D-quinovose = 6-deoxy-6-sulfo-D-fructose. Part of the sulfo-EMP2 pathway, a D-sulfoquinovose degradation pathway that produces sulfolactate (SL). Catalyzes the isomerization of sulfoquinovose (SQ) to 6-deoxy-6-sulfo-D-fructose (SF). This Alkalicoccus urumqiensis (Bacillus urumqiensis) protein is Sulfoquinovose isomerase.